The chain runs to 342 residues: Holliday junction branch migration complex subunit RuvB (342 aa).

The segment at 1–184 (MEEDFNIRDH…FGINLHLEYY (184 aa)) is large ATPase domain (RuvB-L). ATP contacts are provided by residues L23, R24, G65, K68, T69, T70, 131–133 (EDY), R174, Y184, and R221. T69 is a binding site for Mg(2+). Positions 185–255 (DDDILSNIIS…IANYALEALN (71 aa)) are small ATPAse domain (RuvB-S). The head domain (RuvB-H) stretch occupies residues 258–342 (KYGLDEIDNK…YNSQKTLFND (85 aa)). DNA is bound by residues R313 and R318.

It belongs to the RuvB family. As to quaternary structure, homohexamer. Forms an RuvA(8)-RuvB(12)-Holliday junction (HJ) complex. HJ DNA is sandwiched between 2 RuvA tetramers; dsDNA enters through RuvA and exits via RuvB. An RuvB hexamer assembles on each DNA strand where it exits the tetramer. Each RuvB hexamer is contacted by two RuvA subunits (via domain III) on 2 adjacent RuvB subunits; this complex drives branch migration. In the full resolvosome a probable DNA-RuvA(4)-RuvB(12)-RuvC(2) complex forms which resolves the HJ.

The protein localises to the cytoplasm. The catalysed reaction is ATP + H2O = ADP + phosphate + H(+). Functionally, the RuvA-RuvB-RuvC complex processes Holliday junction (HJ) DNA during genetic recombination and DNA repair, while the RuvA-RuvB complex plays an important role in the rescue of blocked DNA replication forks via replication fork reversal (RFR). RuvA specifically binds to HJ cruciform DNA, conferring on it an open structure. The RuvB hexamer acts as an ATP-dependent pump, pulling dsDNA into and through the RuvAB complex. RuvB forms 2 homohexamers on either side of HJ DNA bound by 1 or 2 RuvA tetramers; 4 subunits per hexamer contact DNA at a time. Coordinated motions by a converter formed by DNA-disengaged RuvB subunits stimulates ATP hydrolysis and nucleotide exchange. Immobilization of the converter enables RuvB to convert the ATP-contained energy into a lever motion, pulling 2 nucleotides of DNA out of the RuvA tetramer per ATP hydrolyzed, thus driving DNA branch migration. The RuvB motors rotate together with the DNA substrate, which together with the progressing nucleotide cycle form the mechanistic basis for DNA recombination by continuous HJ branch migration. Branch migration allows RuvC to scan DNA until it finds its consensus sequence, where it cleaves and resolves cruciform DNA. The polypeptide is Holliday junction branch migration complex subunit RuvB (Bacteroides fragilis (strain ATCC 25285 / DSM 2151 / CCUG 4856 / JCM 11019 / LMG 10263 / NCTC 9343 / Onslow / VPI 2553 / EN-2)).